The following is a 224-amino-acid chain: Serum amyloid P-component (224 aa).

A signal peptide spans 1 to 19 (MNKLMSWVSVLIILPEAFA). The region spanning 24 to 224 (RGKVFVFPRE…YVIVKPMVWG (201 aa)) is the Pentraxin (PTX) domain. Residue Asn51 is glycosylated (N-linked (GlcNAc...) asparagine). An intrachain disulfide couples Cys55 to Cys114. Ca(2+) contacts are provided by Asp77, Asn78, Glu155, Gln156, and Asp157. Asn166 carries an N-linked (GlcNAc...) asparagine glycan. Position 167 (Gln167) interacts with Ca(2+).

Belongs to the pentraxin family. Homopentamer. Pentraxin (or pentaxin) have a discoid arrangement of 5 non-covalently bound subunits. The cofactor is Ca(2+).

It is found in the secreted. The chain is Serum amyloid P-component (APCS) from Bos taurus (Bovine).